Consider the following 256-residue polypeptide: Calsenilin (256 aa).

Positions 1–20 (MQPAKEVTKASDGSLLGDLG) are disordered. S14 bears the Phosphoserine mark. K26 participates in a covalent cross-link: Glycyl lysine isopeptide (Lys-Gly) (interchain with G-Cter in SUMO1). S-palmitoyl cysteine attachment occurs at residues C45 and C46. S60 carries the post-translational modification Phosphoserine. Position 63 is a phosphoserine; by CK1 (S63). Residues 67–123 (LELSTVRHQPEGLDQLQAQTKFTKKELQSLYRGFKNECPTGLVDEDTFKLIYAQFFP) form the EF-hand 1; degenerate domain. Residue K90 forms a Glycyl lysine isopeptide (Lys-Gly) (interchain with G-Cter in SUMO1) linkage. EF-hand domains follow at residues 126-161 (DATT…LLRG), 162-197 (TVHE…IYDM), and 210-245 (APAE…DENI). Residues D175, N177, D179, Y181, E186, D223, N225, D227, and E234 each coordinate Ca(2+). Residues 243 to 256 (ENIMSSMQLFENVI) form an interaction with KCND2 region.

The protein belongs to the recoverin family. In terms of assembly, binds to DNA as a homomultimer. Dimerization is induced by binding to calcium. Interacts with the C-terminus of PSEN1 and PSEN2 and with PSEN2 CTF subunit. Associates with KCN1. Component of heteromultimeric potassium channels. Identified in potassium channel complexes containing KCND1, KCND2, KCND3, KCNIP1, KCNIP2, KCNIP3, KCNIP4, DPP6 and DPP10. Interacts with KCND2 and KCND3. Post-translationally, palmitoylated. Palmitoylation enhances association with the plasma membrane. Proteolytically cleaved by caspase-3. In terms of processing, phosphorylation at Ser-63 inhibits cleavage by CASP3. Highly expressed in brain. Widely expressed at lower levels. Expression levels are elevated in brain cortex regions affected by Alzheimer disease.

It is found in the cytoplasm. It localises to the cell membrane. Its subcellular location is the endoplasmic reticulum. The protein resides in the golgi apparatus. The protein localises to the nucleus. Functionally, calcium-dependent transcriptional repressor that binds to the DRE element of genes including PDYN and FOS. Affinity for DNA is reduced upon binding to calcium and enhanced by binding to magnesium. Seems to be involved in nociception. In terms of biological role, regulatory subunit of Kv4/D (Shal)-type voltage-gated rapidly inactivating A-type potassium channels, such as KCND2/Kv4.2 and KCND3/Kv4.3. Modulates channel expression at the cell membrane, gating characteristics, inactivation kinetics and rate of recovery from inactivation in a calcium-dependent and isoform-specific manner. Its function is as follows. May play a role in the regulation of PSEN2 proteolytic processing and apoptosis. Together with PSEN2 involved in modulation of amyloid-beta formation. The chain is Calsenilin (KCNIP3) from Homo sapiens (Human).